The following is a 361-amino-acid chain: FK506-binding protein 39 kDa (361 aa).

Residues 122–256 (LVDEEDEEEE…PSSPKTRTLK (135 aa)) are disordered. The span at 123 to 174 (VDEEDEEEEESDEDYDLSPTEEDLVETVSGDEESEEESESEDNSASEEDELD) shows a compositional bias: acidic residues. Serine 192 bears the Phosphoserine mark. Residues 208–227 (QKVEGTPVKEKKVAFAEKLE) are compositionally biased toward basic and acidic residues. Phosphothreonine is present on threonine 213. Residues 241–252 (QASSNAPSSPKT) are compositionally biased toward polar residues. Phosphoserine is present on serine 249. The 87-residue stretch at 275–361 (GKKVEMRYIG…VFEVKLVRVH (87 aa)) folds into the PPIase FKBP-type domain.

It belongs to the FKBP-type PPIase family. FKBP3/4 subfamily.

It localises to the nucleus. The protein resides in the nucleolus. The enzyme catalyses [protein]-peptidylproline (omega=180) = [protein]-peptidylproline (omega=0). Its function is as follows. PPIase that acts as a histone chaperone. Histone proline isomerase that increases the rate of cis-trans isomerization at prolines on the histone H3 N-terminal tail. Proline isomerization influences H3 methylation thereby regulating gene expression. The sequence is that of FK506-binding protein 39 kDa from Schizosaccharomyces pombe (strain 972 / ATCC 24843) (Fission yeast).